The primary structure comprises 218 residues: Cytidylate kinase (218 aa).

11 to 19 provides a ligand contact to ATP; it reads GPGASGKGT.

This sequence belongs to the cytidylate kinase family. Type 1 subfamily.

The protein localises to the cytoplasm. The catalysed reaction is CMP + ATP = CDP + ADP. It catalyses the reaction dCMP + ATP = dCDP + ADP. The sequence is that of Cytidylate kinase from Neisseria meningitidis serogroup B (strain ATCC BAA-335 / MC58).